The sequence spans 120 residues: NAD(P)H-quinone oxidoreductase subunit 3, chloroplastic (120 aa).

Helical transmembrane passes span 10–30 (FWVF…ISGV), 64–84 (IFAL…PWAM), and 88–108 (VLGV…IVGS).

The protein belongs to the complex I subunit 3 family. As to quaternary structure, NDH is composed of at least 16 different subunits, 5 of which are encoded in the nucleus.

It is found in the plastid. The protein resides in the chloroplast thylakoid membrane. The enzyme catalyses a plastoquinone + NADH + (n+1) H(+)(in) = a plastoquinol + NAD(+) + n H(+)(out). It carries out the reaction a plastoquinone + NADPH + (n+1) H(+)(in) = a plastoquinol + NADP(+) + n H(+)(out). NDH shuttles electrons from NAD(P)H:plastoquinone, via FMN and iron-sulfur (Fe-S) centers, to quinones in the photosynthetic chain and possibly in a chloroplast respiratory chain. The immediate electron acceptor for the enzyme in this species is believed to be plastoquinone. Couples the redox reaction to proton translocation, and thus conserves the redox energy in a proton gradient. This chain is NAD(P)H-quinone oxidoreductase subunit 3, chloroplastic, found in Pelargonium hortorum (Common geranium).